The sequence spans 292 residues: Cbb3-type cytochrome c oxidase subunit CcoP (292 aa).

2 helical membrane-spanning segments follow: residues 11 to 31 (FGLIAALVILVLTIYESSSLI) and 62 to 82 (VGWIASFMCTIVWAFWYFFFG). 2 consecutive Cytochrome c domains span residues 116–195 (ELVD…MAEI) and 205–288 (QLID…QSLK). Heme c-binding residues include Cys-129, Cys-132, His-133, Met-174, Cys-219, Cys-222, His-223, and Met-264.

It belongs to the CcoP / FixP family. In terms of assembly, component of the cbb3-type cytochrome c oxidase at least composed of CcoN, CcoO, CcoQ and CcoP. Heme c is required as a cofactor.

It localises to the cell inner membrane. Its pathway is energy metabolism; oxidative phosphorylation. C-type cytochrome. Part of the cbb3-type cytochrome c oxidase complex. CcoP subunit is required for transferring electrons from donor cytochrome c via its heme groups to CcoO subunit. From there, electrons are shuttled to the catalytic binuclear center of CcoN subunit where oxygen reduction takes place. The complex also functions as a proton pump. The polypeptide is Cbb3-type cytochrome c oxidase subunit CcoP (Helicobacter pylori (strain 52)).